The primary structure comprises 226 residues: Cytidylate kinase (226 aa).

An ATP-binding site is contributed by 11 to 19 (GPAGAGKST).

The protein belongs to the cytidylate kinase family. Type 1 subfamily.

Its subcellular location is the cytoplasm. It catalyses the reaction CMP + ATP = CDP + ADP. It carries out the reaction dCMP + ATP = dCDP + ADP. This Pelotomaculum thermopropionicum (strain DSM 13744 / JCM 10971 / SI) protein is Cytidylate kinase.